Here is a 1910-residue protein sequence, read N- to C-terminus: Endoribonuclease dcr-1 (1910 aa).

The Helicase ATP-binding domain occupies 20–201 (LLDKATKKNT…KLMEQLKKLE (182 aa)). 33–40 (LGTGSGKT) lines the ATP pocket. The DEAH box signature appears at 145-148 (DECH). A Helicase C-terminal domain is found at 371-542 (EFQKERMKLE…TVNNPIEDDS (172 aa)). Residues 571 to 667 (AIALINRYCS…LPKGRESIAK (97 aa)) enclose the Dicer dsRNA-binding fold domain. The PAZ domain occupies 845–1003 (YVSEVVANME…LVPELMDIHP (159 aa)). Disordered stretches follow at residues 951-988 (RIQNQPRRSRTVSNSSTSNIPQASASDSKESNTSVPHS), 1227-1248 (TASSSLSQTVQESTVSPPKQLT), and 1272-1309 (LEMSEDMEKPRRLEDTVNLEDYGDDQENQEDENTPTNF). Polar residues-rich tracts occupy residues 970–988 (IPQASASDSKESNTSVPHS) and 1227–1245 (TASSSLSQTVQESTVSPPK). Positions 1245 to 1280 (KQLTKEEEQFKKLQNDLLKQAKERLEALEMSEDMEK) form a coiled coil. The segment covering 1272-1286 (LEMSEDMEKPRRLED) has biased composition (basic and acidic residues). Residues 1288–1304 (VNLEDYGDDQENQEDEN) show a composition bias toward acidic residues. RNase III domains lie at 1381–1589 (VSHI…LTLG) and 1643–1805 (FTQL…LDSG). Positions 1682, 1791, and 1794 each coordinate Mg(2+). In terms of domain architecture, DRBM spans 1833–1896 (SPIRELMEFE…AKRALKYLHQ (64 aa)).

This sequence belongs to the helicase family. Dicer subfamily. In terms of assembly, component of the ERI/DICER complex at least composed of dcr-1, rrf-3 and eri-1. Interacts with pir-1. Requires Mg(2+) as cofactor. The cofactor is Mn(2+).

Its function is as follows. Component of the ERI/DICER complex which is involved in processing amplified double-stranded RNA (dsRNA) intermediates during small-RNA-mediated gene-silencing or RNA interference (RNAi). Involved in cleaving dsRNA in the RNAi pathway. It produces 21 to 23 bp dsRNAs (siRNAs) which target the selective destruction of homologous RNAs. Seems to process the precursor of the small temporal RNA let-7 which is involved in developmental timing. Required for avoidance behavior induced by small RNAs derived from pathogenic bacteria such as P.aeruginosa. Involved in innate immunity through its role in small RNA processing. Functionally, tDCR-1 acts as a deoxyribonuclease (DNase) initiating DNA fragmentation during apoptosis, upstream of nucleases cps-6, crn-2 and nuc-1. This chain is Endoribonuclease dcr-1, found in Caenorhabditis elegans.